A 187-amino-acid chain; its full sequence is Transcriptional activator of sulfur metabolism MET28 (187 aa).

Residues 105–168 form the bZIP domain; the sequence is DKIKQERRRK…EFWKAKLNDI (64 aa). The basic motif stretch occupies residues 106–136; that stretch reads KIKQERRRKNTEASQRFRIRKKQKNFENMNK. The leucine-zipper stretch occupies residues 137–151; sequence LQNLNTQINKLRDRI.

It belongs to the bZIP family. In terms of assembly, interacts with MET4 to form a heteromeric complex which also includes CBF1. Forms two alternate complexes associating MET28 with MET4 and either MET31 or MET32. Binds to DNA through the MET4-MET28-CBF1 complex.

Its subcellular location is the cytoplasm. It is found in the nucleus. Acts as an accessory factor in the activation of sulfur amino acids metabolism genes. Possesses no intrinsic transcription activation abilities. Binds to the MET16 promoter as a complex with MET4 and CBF1. Enhances the DNA-binding activity of CBF1. The sequence is that of Transcriptional activator of sulfur metabolism MET28 (MET28) from Saccharomyces cerevisiae (strain ATCC 204508 / S288c) (Baker's yeast).